The chain runs to 418 residues: Glutamyl-tRNA reductase (418 aa).

Substrate is bound by residues 49–52 (TCNR), Ser-108, 113–115 (EPQ), and Gln-119. Catalysis depends on Cys-50, which acts as the Nucleophile. 188 to 193 (GAGETI) is a binding site for NADP(+).

This sequence belongs to the glutamyl-tRNA reductase family. Homodimer.

The enzyme catalyses (S)-4-amino-5-oxopentanoate + tRNA(Glu) + NADP(+) = L-glutamyl-tRNA(Glu) + NADPH + H(+). It functions in the pathway porphyrin-containing compound metabolism; protoporphyrin-IX biosynthesis; 5-aminolevulinate from L-glutamyl-tRNA(Glu): step 1/2. Catalyzes the NADPH-dependent reduction of glutamyl-tRNA(Glu) to glutamate 1-semialdehyde (GSA). The sequence is that of Glutamyl-tRNA reductase from Aliivibrio salmonicida (strain LFI1238) (Vibrio salmonicida (strain LFI1238)).